A 73-amino-acid chain; its full sequence is UPF0154 protein MG335.1 (73 aa).

Residues leucine 6–isoleucine 26 form a helical membrane-spanning segment.

The protein belongs to the UPF0154 family.

Its subcellular location is the membrane. This is UPF0154 protein MG335.1 from Mycoplasma genitalium (strain ATCC 33530 / DSM 19775 / NCTC 10195 / G37) (Mycoplasmoides genitalium).